The chain runs to 244 residues: MPRPSPCADSGGGMMTTLTARPEAITFDPQQSALIVVDMQNAYATPGGYLDLAGFDVSTTRPVIANIQTAVTAARAAGMLIIWFQNGWDEQYVEAGGPGSPNFHKSNALKTMRKQPQLQGKLLAKGSWDYQLVDELVPQPGDIVLPKPRYSGFFNTPLDSILRSRGIRHLVFTGIATNVCVESTLRDGFFLEYFGVVLEDATHQAGPEFVQKAALFNIETFFGWVSDVETFCDALSPTSFARIA.

Aspartate 38 serves as the catalytic Proton acceptor. The active site involves lysine 147. The Nucleophile role is filled by cysteine 180.

The protein belongs to the isochorismatase family. RutB subfamily.

The catalysed reaction is (Z)-3-ureidoacrylate + H2O + H(+) = (Z)-3-aminoacrylate + NH4(+) + CO2. The enzyme catalyses (Z)-3-ureidoacrylate + H2O = (Z)-3-aminoacrylate + carbamate + H(+). It carries out the reaction (Z)-2-methylureidoacrylate + H2O + H(+) = (Z)-2-methylaminoacrylate + NH4(+) + CO2. Functionally, hydrolyzes ureidoacrylate to form aminoacrylate and carbamate. The carbamate hydrolyzes spontaneously, thereby releasing one of the nitrogen atoms of the pyrimidine ring as ammonia and one of its carbon atoms as CO2. This is Ureidoacrylate amidohydrolase RutB from Escherichia coli O55:H7 (strain CB9615 / EPEC).